A 111-amino-acid chain; its full sequence is Cornifelin homolog (111 aa).

Belongs to the cornifelin family.

The sequence is that of Cornifelin homolog (cnfn) from Xenopus tropicalis (Western clawed frog).